The primary structure comprises 503 residues: Aromatase (503 aa).

Transmembrane regions (helical) follow at residues 19 to 39 and 51 to 71; these read EVMP…FFVW and GYCM…MGLG. Residues 294-324 are substrate-binding pocket; it reads ENVNQCILEMMIAAPDTLSVTVFFMLCLIAQ. 2 residues coordinate substrate: Asp-309 and Met-374. Position 437 (Cys-437) interacts with heme.

The protein belongs to the cytochrome P450 family. Requires heme as cofactor. In terms of tissue distribution, expressed in placenta. Highly expressed in follicles (0 hour:hCG), followed by a drop (12-24 hour:hCG) and by an increase (30-39 hour:hCG). Highly expressed in corpora lutea. Also expressed in granulosa cell layer. Not expressed in theca interna.

It is found in the endoplasmic reticulum membrane. The protein localises to the microsome membrane. The enzyme catalyses testosterone + 3 reduced [NADPH--hemoprotein reductase] + 3 O2 = 17beta-estradiol + formate + 3 oxidized [NADPH--hemoprotein reductase] + 4 H2O + 4 H(+). The catalysed reaction is androst-4-ene-3,17-dione + 3 reduced [NADPH--hemoprotein reductase] + 3 O2 = estrone + formate + 3 oxidized [NADPH--hemoprotein reductase] + 4 H2O + 4 H(+). It carries out the reaction androst-4-ene-3,17-dione + reduced [NADPH--hemoprotein reductase] + O2 = 19-hydroxyandrost-4-ene-3,17-dione + oxidized [NADPH--hemoprotein reductase] + H2O + H(+). It catalyses the reaction 19-hydroxyandrost-4-ene-3,17-dione + reduced [NADPH--hemoprotein reductase] + O2 = 19-oxo-androst-4-ene-3,17-dione + oxidized [NADPH--hemoprotein reductase] + 2 H2O + H(+). The enzyme catalyses 19-oxo-androst-4-ene-3,17-dione + reduced [NADPH--hemoprotein reductase] + O2 = estrone + formate + oxidized [NADPH--hemoprotein reductase] + H2O + 2 H(+). The catalysed reaction is estrone + reduced [NADPH--hemoprotein reductase] + O2 = 2-hydroxyestrone + oxidized [NADPH--hemoprotein reductase] + H2O + H(+). It carries out the reaction 17beta-hydroxy-5alpha-androstan-3-one + reduced [NADPH--hemoprotein reductase] + O2 = 17beta,19-dihydroxy-3-oxo-5alpha-androstanone + oxidized [NADPH--hemoprotein reductase] + H2O + H(+). It catalyses the reaction 17beta,19-dihydroxy-3-oxo-5alpha-androstanone + reduced [NADPH--hemoprotein reductase] + O2 = 17beta-hydroxy-3,19-dioxo-5alpha-androstanone + oxidized [NADPH--hemoprotein reductase] + 2 H2O + H(+). The enzyme catalyses 17beta-hydroxy-3,19-dioxo-5alpha-androstanone + reduced [NADPH--hemoprotein reductase] + O2 = 17beta-hydroxy-3-oxo-19-nor-5alpha-androst-1-ene + formate + oxidized [NADPH--hemoprotein reductase] + H2O + 2 H(+). It functions in the pathway steroid hormone biosynthesis. A cytochrome P450 monooxygenase that catalyzes the conversion of C19 androgens, androst-4-ene-3,17-dione (androstenedione) and testosterone to the C18 estrogens, estrone and estradiol, respectively. Catalyzes three successive oxidations of C19 androgens: two conventional oxidations at C19 yielding 19-hydroxy and 19-oxo/19-aldehyde derivatives, followed by a third oxidative aromatization step that involves C1-beta hydrogen abstraction combined with cleavage of the C10-C19 bond to yield a phenolic A ring and formic acid. Alternatively, the third oxidative reaction yields a 19-norsteroid and formic acid. Converts dihydrotestosterone to delta1,10-dehydro 19-nordihydrotestosterone and may play a role in homeostasis of this potent androgen. Also displays 2-hydroxylase activity toward estrone. Mechanistically, uses molecular oxygen inserting one oxygen atom into a substrate, and reducing the second into a water molecule, with two electrons provided by NADPH via cytochrome P450 reductase (CPR; NADPH-ferrihemoprotein reductase). The chain is Aromatase (CYP19A1) from Equus caballus (Horse).